The following is a 106-amino-acid chain: Urease subunit beta (106 aa).

Belongs to the urease beta subunit family. Heterotrimer of UreA (gamma), UreB (beta) and UreC (alpha) subunits. Three heterotrimers associate to form the active enzyme.

It localises to the cytoplasm. It carries out the reaction urea + 2 H2O + H(+) = hydrogencarbonate + 2 NH4(+). It functions in the pathway nitrogen metabolism; urea degradation; CO(2) and NH(3) from urea (urease route): step 1/1. The protein is Urease subunit beta of Citrobacter koseri (strain ATCC BAA-895 / CDC 4225-83 / SGSC4696).